A 412-amino-acid chain; its full sequence is uncharacterized protein (412 aa).

Transmembrane regions (helical) follow at residues 17-37 (LLLALALTMGVFAAGSEELVI), 54-74 (VLALSISIYGVMIFIGAPLLV), 91-111 (MIFIIGTVICALAQNIFFFFL), 112-132 (GRALSGLAAGAFVPTAYAVVG), 146-166 (LIVSSWSLALIFGVPLGSFIG), 173-193 (WTFWIFALMGVLVVLLILLEM), 225-245 (VYITITFCNMIGFYGMYSFLG), 257-277 (TAAGLFIMIYGIGFSMSVITG), 299-319 (LLACLPYAPASMFLLIASLFI), 346-366 (VMVFYSLASNLAVTLGSALMG), and 375-395 (AAVGLICAAITVLGFVLSVFA).

It belongs to the major facilitator superfamily.

It is found in the cell membrane. This is an uncharacterized protein from Bacillus subtilis (strain 168).